We begin with the raw amino-acid sequence, 361 residues long: Transcription factor TCP10 (361 aa).

Residues 29-87 (RKDRHSKVFTSKGPRDRRVRLSAHTAIQFYDVQDRLGYDRPSKAVDWLIKKAKTAIDKL) form the TCP domain. Disordered regions lie at residues 220–259 (DLTM…QPSM) and 295–317 (SWDH…SMFA). Residues 295–304 (SWDHHQTTSD) are compositionally biased toward basic and acidic residues.

As to quaternary structure, interacts with AHP1, AHP2 and AHP3. Interacts with SPL. In terms of tissue distribution, mostly detected in lateral organs, such as leaves and flowers. Expressed in cotyledons, particularly in the vascular region, in leaves, roots, stems, buds, flowers and immature siliques.

Its subcellular location is the nucleus. Its function is as follows. Plays a pivotal role in the control of morphogenesis of shoot organs by negatively regulating the expression of boundary-specific genes such as CUC genes, probably through the induction of miRNA (e.g. miR164). Participates in ovule development. In Arabidopsis thaliana (Mouse-ear cress), this protein is Transcription factor TCP10 (TCP10).